We begin with the raw amino-acid sequence, 163 residues long: MAKDNSFDIVSQIDLQEVDNAINQSSKEISQRFDLKGTNTTVERNDTEISINAPDDMKLKNVVDILQTKLTQRGISLKALEYGKIEHALGGRAKQVIKLQQGIDKDQAKKITTLIKDSKIKVQASIQGESVRVSGKNRDDLQAAIQLLKEADLPMNLQFTNYR.

The protein belongs to the YajQ family.

Nucleotide-binding protein. The sequence is that of Nucleotide-binding protein Clos_1967 from Alkaliphilus oremlandii (strain OhILAs) (Clostridium oremlandii (strain OhILAs)).